A 204-amino-acid polypeptide reads, in one-letter code: Pyridoxal 5'-phosphate synthase subunit PdxT (204 aa).

An L-glutamine-binding site is contributed by 52–54 (GES). Cysteine 84 (nucleophile) is an active-site residue. Residues arginine 116 and 143 to 144 (IR) contribute to the L-glutamine site. Active-site charge relay system residues include histidine 184 and glutamate 186.

The protein belongs to the glutaminase PdxT/SNO family. In terms of assembly, in the presence of PdxS, forms a dodecamer of heterodimers. Only shows activity in the heterodimer.

It catalyses the reaction aldehydo-D-ribose 5-phosphate + D-glyceraldehyde 3-phosphate + L-glutamine = pyridoxal 5'-phosphate + L-glutamate + phosphate + 3 H2O + H(+). The catalysed reaction is L-glutamine + H2O = L-glutamate + NH4(+). It functions in the pathway cofactor biosynthesis; pyridoxal 5'-phosphate biosynthesis. In terms of biological role, catalyzes the hydrolysis of glutamine to glutamate and ammonia as part of the biosynthesis of pyridoxal 5'-phosphate. The resulting ammonia molecule is channeled to the active site of PdxS. The chain is Pyridoxal 5'-phosphate synthase subunit PdxT from Pyrobaculum aerophilum (strain ATCC 51768 / DSM 7523 / JCM 9630 / CIP 104966 / NBRC 100827 / IM2).